Consider the following 336-residue polypeptide: Ribosomal RNA large subunit methyltransferase F (336 aa).

The interval 1–24 is disordered; the sequence is MPRPTSPHPDAERKSASPLHPRNR.

It belongs to the methyltransferase superfamily. METTL16/RlmF family.

The protein resides in the cytoplasm. It carries out the reaction adenosine(1618) in 23S rRNA + S-adenosyl-L-methionine = N(6)-methyladenosine(1618) in 23S rRNA + S-adenosyl-L-homocysteine + H(+). Functionally, specifically methylates the adenine in position 1618 of 23S rRNA. This Pseudomonas aeruginosa (strain LESB58) protein is Ribosomal RNA large subunit methyltransferase F.